A 77-amino-acid chain; its full sequence is Translational regulator CsrA (77 aa).

This sequence belongs to the CsrA/RsmA family. As to quaternary structure, homodimer; the beta-strands of each monomer intercalate to form a hydrophobic core, while the alpha-helices form wings that extend away from the core.

It is found in the cytoplasm. Its function is as follows. A translational regulator that binds mRNA to regulate translation initiation and/or mRNA stability. Usually binds in the 5'-UTR at or near the Shine-Dalgarno sequence preventing ribosome-binding, thus repressing translation. Its main target seems to be the major flagellin gene, while its function is anatagonized by FliW. In Desulfitobacterium hafniense (strain DSM 10664 / DCB-2), this protein is Translational regulator CsrA.